Here is a 307-residue protein sequence, read N- to C-terminus: MPSEHPFSDGISTLNPKETMNDTAQITASYGRRYIVRTPDGTTYEASTRKKRVDFACGDRVRISPVNAEQVVIEDFLPRQSLLYRQDAWKTKLIAANVTQLLIVTAAVPSPSVRLLQRALLAAEAAGIRAVIVLNKADLPETALWREKLKFYETLGYPVIETRALENAGSLRPALQGHSNILLGQSGMGKSTLTNALLGSQTARTGDISAALDSGKHTTTHARLYDLNGETQLIDSPGLQEFGLHHLQAADLPRYFPDFRHLVGQCRFHNCTHRAEPGCAFKAAAETRAASPERLAFLQGITDELPG.

In terms of domain architecture, CP-type G spans 85-242; sequence RQDAWKTKLI…LIDSPGLQEF (158 aa). GTP contacts are provided by residues 135–138 and 184–192; these read NKAD and GQSGMGKST. Zn(2+)-binding residues include cysteine 266, cysteine 271, histidine 273, and cysteine 279.

It belongs to the TRAFAC class YlqF/YawG GTPase family. RsgA subfamily. Monomer. Associates with 30S ribosomal subunit, binds 16S rRNA. It depends on Zn(2+) as a cofactor.

The protein localises to the cytoplasm. Functionally, one of several proteins that assist in the late maturation steps of the functional core of the 30S ribosomal subunit. Helps release RbfA from mature subunits. May play a role in the assembly of ribosomal proteins into the subunit. Circularly permuted GTPase that catalyzes slow GTP hydrolysis, GTPase activity is stimulated by the 30S ribosomal subunit. This chain is Small ribosomal subunit biogenesis GTPase RsgA, found in Neisseria meningitidis serogroup C (strain 053442).